A 373-amino-acid chain; its full sequence is Dual-specificity RNA methyltransferase RlmN (373 aa).

Glu94 serves as the catalytic Proton acceptor. The Radical SAM core domain occupies 100-339 (EDDRATLCVS…VIVRKTRGDD (240 aa)). Cys107 and Cys344 are oxidised to a cystine. 3 residues coordinate [4Fe-4S] cluster: Cys114, Cys118, and Cys121. Residues 168 to 169 (GE), Ser200, 222 to 224 (SIH), and Asn301 contribute to the S-adenosyl-L-methionine site. Cys344 functions as the S-methylcysteine intermediate in the catalytic mechanism.

This sequence belongs to the radical SAM superfamily. RlmN family. Requires [4Fe-4S] cluster as cofactor.

It is found in the cytoplasm. The catalysed reaction is adenosine(2503) in 23S rRNA + 2 reduced [2Fe-2S]-[ferredoxin] + 2 S-adenosyl-L-methionine = 2-methyladenosine(2503) in 23S rRNA + 5'-deoxyadenosine + L-methionine + 2 oxidized [2Fe-2S]-[ferredoxin] + S-adenosyl-L-homocysteine. It carries out the reaction adenosine(37) in tRNA + 2 reduced [2Fe-2S]-[ferredoxin] + 2 S-adenosyl-L-methionine = 2-methyladenosine(37) in tRNA + 5'-deoxyadenosine + L-methionine + 2 oxidized [2Fe-2S]-[ferredoxin] + S-adenosyl-L-homocysteine. Its function is as follows. Specifically methylates position 2 of adenine 2503 in 23S rRNA and position 2 of adenine 37 in tRNAs. m2A2503 modification seems to play a crucial role in the proofreading step occurring at the peptidyl transferase center and thus would serve to optimize ribosomal fidelity. This is Dual-specificity RNA methyltransferase RlmN from Shewanella putrefaciens (strain CN-32 / ATCC BAA-453).